A 1225-amino-acid polypeptide reads, in one-letter code: RNA-directed RNA polymerase VP2 (1225 aa).

Residues 497 to 727 (LFLSFMPYTI…NSIVLLQQLV (231 aa)) form the RdRp catalytic domain.

Belongs to the reoviridae RNA-directed RNA polymerase family. As to quaternary structure, interacts with VP6.

The catalysed reaction is RNA(n) + a ribonucleoside 5'-triphosphate = RNA(n+1) + diphosphate. Functionally, RNA-directed RNA polymerase that is involved in transcription and genome replication. Following infection, it catalyzes the synthesis of fully conservative plus strands. After core assembly, which consists in recruitment of one capped plus-strand for each genomic segments and polymerase complexes, the polymerase switches mode and catalyzes the synthesis of complementary minus-strands. This Lymantria dispar (Gypsy moth) protein is RNA-directed RNA polymerase VP2 (S2).